Here is a 78-residue protein sequence, read N- to C-terminus: MAKPPVRKPKKKVCVFCQEKMTYVDYKDTTLLRKFISDRGKIRARRVTGNCTQHQRDVAKAVKNAREMALLPYTSSAR.

This sequence belongs to the bacterial ribosomal protein bS18 family. Part of the 30S ribosomal subunit. Forms a tight heterodimer with protein bS6.

Binds as a heterodimer with protein bS6 to the central domain of the 16S rRNA, where it helps stabilize the platform of the 30S subunit. This chain is Small ribosomal subunit protein bS18, found in Thermobifida fusca (strain YX).